The following is a 396-amino-acid chain: Septu protein PtuA (396 aa).

In terms of biological role, component of antiviral defense system Septu type I, composed of PtuA and PtuB. Expression of Septu type I in B.subtilis (strain BEST7003) confers resistance to phages SBSphiC and SBSphiJ. May be an ATPase. The chain is Septu protein PtuA from Bacillus thuringiensis.